Here is a 129-residue protein sequence, read N- to C-terminus: Small ribosomal subunit protein uS8 (129 aa).

It belongs to the universal ribosomal protein uS8 family. In terms of assembly, part of the 30S ribosomal subunit.

Its function is as follows. One of the primary rRNA binding proteins, it binds directly to 16S rRNA central domain where it helps coordinate assembly of the platform of the 30S subunit. The protein is Small ribosomal subunit protein uS8 of Thermoplasma acidophilum (strain ATCC 25905 / DSM 1728 / JCM 9062 / NBRC 15155 / AMRC-C165).